Reading from the N-terminus, the 327-residue chain is DNA-directed RNA polymerase subunit alpha (327 aa).

The interval 1–233 is alpha N-terminal domain (alpha-NTD); it reads MVREKVKVST…NLFIPFLHVE (233 aa). The tract at residues 267–327 is alpha C-terminal domain (alpha-CTD); sequence LAFQYIFIDQ…KKILDILEKK (61 aa).

The protein belongs to the RNA polymerase alpha chain family. In terms of assembly, in plastids the minimal PEP RNA polymerase catalytic core is composed of four subunits: alpha, beta, beta', and beta''. When a (nuclear-encoded) sigma factor is associated with the core the holoenzyme is formed, which can initiate transcription.

The protein localises to the plastid. It localises to the chloroplast. It carries out the reaction RNA(n) + a ribonucleoside 5'-triphosphate = RNA(n+1) + diphosphate. DNA-dependent RNA polymerase catalyzes the transcription of DNA into RNA using the four ribonucleoside triphosphates as substrates. The polypeptide is DNA-directed RNA polymerase subunit alpha (Draba nemorosa (Woodland whitlowgrass)).